The following is a 793-amino-acid chain: Protocadherin beta-7 (793 aa).

A signal peptide spans 1 to 26 (MEARVERAVQKRQVLFLCVFLGMSWA). Over 27–688 (GAEPLRYFVA…DQANLLTVYL (662 aa)) the chain is Extracellular. 5 Cadherin domains span residues 35–133 (VAEE…APVF), 138–242 (ISLK…APDF), 247–347 (YKVQ…RPEL), 352–451 (LTSP…APAF), and 456–561 (YTLF…SPFV). N-linked (GlcNAc...) asparagine glycosylation occurs at Asn169. 2 N-linked (GlcNAc...) asparagine glycosylation sites follow: Asn418 and Asn436. Asn567 carries an N-linked (GlcNAc...) asparagine glycan. Residues 568 to 671 (SSAPCTEPLP…LVDGFSQPYL (104 aa)) enclose the Cadherin 6 domain. A helical membrane pass occupies residues 689-709 (VVALASVSSLFLLSVLLFVAV). Residues 710-793 (RLCRRSRAAP…NRPFQNNLGF (84 aa)) are Cytoplasmic-facing.

It is found in the cell membrane. Its function is as follows. Potential calcium-dependent cell-adhesion protein. May be involved in the establishment and maintenance of specific neuronal connections in the brain. The sequence is that of Protocadherin beta-7 (PCDHB7) from Pan troglodytes (Chimpanzee).